Here is a 485-residue protein sequence, read N- to C-terminus: NADH-quinone oxidoreductase subunit N (485 aa).

The next 14 membrane-spanning stretches (helical) occupy residues 8–28 (LIALLPLLIVGLTVVVVMLSI), 35–55 (FLNATLSVIGLNAALVSLWFV), 71–91 (GFAMLYTGLVLLASLATCTFA), 105–125 (FYLLVLIASLGGILLTNANHL), 127–147 (ALFLGIELISLPLFGLIGYAF), 159–179 (YTILSAAASSFLLFGMALVYA), 203–223 (LLAGFGLMIVGLGFKLSLVPF), 235–255 (PAPVSTFLATASKIAIFGVVM), 271–291 (VVLGIIAFASIIFGNLMALSQ), 297–317 (LLGYSSISHLGYLLVALIALQ), 326–346 (VGVYLAGYLFSSLGAFGVVSL), 373–393 (AAVMTVMMLSLAGIPMTLGFI), 408–430 (WWLVAAVVVGSAIGLYYYLRVAV), and 455–475 (IVVLISALLVLVLGVWPQPLI).

The protein belongs to the complex I subunit 2 family. As to quaternary structure, NDH-1 is composed of 13 different subunits. Subunits NuoA, H, J, K, L, M, N constitute the membrane sector of the complex.

The protein localises to the cell inner membrane. The catalysed reaction is a quinone + NADH + 5 H(+)(in) = a quinol + NAD(+) + 4 H(+)(out). NDH-1 shuttles electrons from NADH, via FMN and iron-sulfur (Fe-S) centers, to quinones in the respiratory chain. The immediate electron acceptor for the enzyme in this species is believed to be ubiquinone. Couples the redox reaction to proton translocation (for every two electrons transferred, four hydrogen ions are translocated across the cytoplasmic membrane), and thus conserves the redox energy in a proton gradient. The polypeptide is NADH-quinone oxidoreductase subunit N (Salmonella dublin (strain CT_02021853)).